The sequence spans 163 residues: Neurotrophin-3 (163 aa).

The N-terminal stretch at 1–3 (IQS) is a signal peptide. The propeptide occupies 4-119 (TSMDQGILTE…ALNRTSRRKR (116 aa)). Disordered regions lie at residues 38–60 (ARTKDGTQTTVKKSEAEADATAS) and 90–131 (LLSE…YSVC). Asn112 is a glycosylation site (N-linked (GlcNAc...) asparagine).

The protein belongs to the NGF-beta family.

It is found in the secreted. In terms of biological role, seems to promote the survival of visceral and proprioceptive sensory neurons. This is Neurotrophin-3 (NTF3) from Eunectes notaeus (Yellow anaconda).